The primary structure comprises 362 residues: S-adenosylmethionine:tRNA ribosyltransferase-isomerase (362 aa).

It belongs to the QueA family. In terms of assembly, monomer.

Its subcellular location is the cytoplasm. It carries out the reaction 7-aminomethyl-7-carbaguanosine(34) in tRNA + S-adenosyl-L-methionine = epoxyqueuosine(34) in tRNA + adenine + L-methionine + 2 H(+). The protein operates within tRNA modification; tRNA-queuosine biosynthesis. Functionally, transfers and isomerizes the ribose moiety from AdoMet to the 7-aminomethyl group of 7-deazaguanine (preQ1-tRNA) to give epoxyqueuosine (oQ-tRNA). The sequence is that of S-adenosylmethionine:tRNA ribosyltransferase-isomerase from Deinococcus radiodurans (strain ATCC 13939 / DSM 20539 / JCM 16871 / CCUG 27074 / LMG 4051 / NBRC 15346 / NCIMB 9279 / VKM B-1422 / R1).